The chain runs to 180 residues: Large ribosomal subunit protein uL15 (180 aa).

Residues 1–62 are disordered; that stretch reads MKKERLEQAS…KTAGRGSKGQ (62 aa).

This sequence belongs to the universal ribosomal protein uL15 family. As to quaternary structure, part of the 50S ribosomal subunit.

In terms of biological role, binds to the 23S rRNA. This is Large ribosomal subunit protein uL15 from Leptospira interrogans serogroup Icterohaemorrhagiae serovar copenhageni (strain Fiocruz L1-130).